The sequence spans 310 residues: Vomeronasal type-1 receptor 101 (310 aa).

Over M1 to S19 the chain is Extracellular. The chain crosses the membrane as a helical span at residues E20 to F40. Topologically, residues E41–D49 are cytoplasmic. A helical transmembrane segment spans residues L50–A70. Topologically, residues A71–R93 are extracellular. An intrachain disulfide couples C85 to C172. A helical membrane pass occupies residues L94–L114. Residues S115–G134 are Cytoplasmic-facing. A helical membrane pass occupies residues A135–I155. Over A156–E193 the chain is Extracellular. Residue N159 is glycosylated (N-linked (GlcNAc...) asparagine). The chain crosses the membrane as a helical span at residues V194 to H214. Residues K215–R238 lie on the Cytoplasmic side of the membrane. The helical transmembrane segment at T239–H259 threads the bilayer. Topologically, residues S260–S268 are extracellular. Residues I269–F289 form a helical membrane-spanning segment. Residues V290 to T310 are Cytoplasmic-facing.

It belongs to the G-protein coupled receptor 1 family. In terms of tissue distribution, expressed in 1-4% of neurons of the vomeronasal organ. Only one pheromone receptor gene may be expressed in a particular neuron. Not expressed in the main olfactory epithelium.

It localises to the cell membrane. In terms of biological role, putative pheromone receptor implicated in the regulation of social as well as reproductive behavior. This Rattus norvegicus (Rat) protein is Vomeronasal type-1 receptor 101 (Vom1r101).